The following is a 230-amino-acid chain: MQIHLLIVDALNLIRRIHAVQGSPCVKACQHALQQLIQHSQPSHAVAVFDEDDRSDSWRHQCLPDYKAGRSPMPDNLQQEMPLIRQAFNELGVACWHSPGNEADDLAATLVVKVAGAGHQVTIVSTDKGYCQLLAPNIQIRDYFQKRWLDMPFVKQEFGVLPRQLPDYWGLAGISSSKIPGVAGVGAKTATLLLQQADTLEVLYQNLESIPECQRRMKSDPLISPPTAQY.

Asp104 contacts Mg(2+). In terms of domain architecture, 5'-3' exonuclease spans 160-215 (VLPRQLPDYWGLAGISSSKIPGVAGVGAKTATLLLQQADTLEVLYQNLESIPECQR). The K(+) site is built by Leu171, Ala172, Pro180, Val182, and Val185. The interval 184–189 (GVGAKT) is interaction with DNA.

This sequence belongs to the Xni family. Mg(2+) is required as a cofactor. It depends on K(+) as a cofactor.

Functionally, has flap endonuclease activity. During DNA replication, flap endonucleases cleave the 5'-overhanging flap structure that is generated by displacement synthesis when DNA polymerase encounters the 5'-end of a downstream Okazaki fragment. The chain is Flap endonuclease Xni (xni) from Yersinia pestis bv. Antiqua (strain Antiqua).